A 236-amino-acid polypeptide reads, in one-letter code: Small ribosomal subunit protein uS2c (236 aa).

This sequence belongs to the universal ribosomal protein uS2 family.

It localises to the plastid. Its subcellular location is the chloroplast. The sequence is that of Small ribosomal subunit protein uS2c (rps2) from Vitis vinifera (Grape).